The sequence spans 349 residues: Inositol-tetrakisphosphate 1-kinase 2 (349 aa).

1D-myo-inositol 1,3,4-trisphosphate is bound by residues Lys-48 and Lys-90. 2 residues coordinate ATP: Arg-125 and Lys-175. The 1D-myo-inositol 1,3,4-trisphosphate site is built by His-186 and Lys-218. ATP contacts are provided by residues 207–218 (QEFVNHGGILFK) and Ser-233. Residues Asp-298, Asp-313, and Asn-315 each contribute to the Mg(2+) site. Position 315 (Asn-315) interacts with 1D-myo-inositol 1,3,4-trisphosphate.

Belongs to the ITPK1 family. Monomer. Requires Mg(2+) as cofactor.

The enzyme catalyses 1D-myo-inositol 3,4,5,6-tetrakisphosphate + ATP = 1D-myo-inositol 1,3,4,5,6-pentakisphosphate + ADP + H(+). It carries out the reaction 1D-myo-inositol 1,3,4-trisphosphate + ATP = 1D-myo-inositol 1,3,4,5-tetrakisphosphate + ADP + H(+). It catalyses the reaction 1D-myo-inositol 1,3,4-trisphosphate + ATP = 1D-myo-inositol 1,3,4,6-tetrakisphosphate + ADP + H(+). Its function is as follows. Kinase that can phosphorylate various inositol polyphosphate such as Ins(3,4,5,6)P4 or Ins(1,3,4)P3 and participates in phytic acid biosynthesis in developing seeds. Phytic acid is the primary storage form of phosphorus in cereal grains and other plant seeds. The sequence is that of Inositol-tetrakisphosphate 1-kinase 2 (ITPK2) from Oryza sativa subsp. indica (Rice).